Here is a 79-residue protein sequence, read N- to C-terminus: ATP synthase subunit c (79 aa).

Helical transmembrane passes span 11–31 (MAAAVMMGLAAIGAAIGIGIL) and 53–73 (FFIVMGLVDAIPMIAVGLGLY).

The protein belongs to the ATPase C chain family. F-type ATPases have 2 components, F(1) - the catalytic core - and F(0) - the membrane proton channel. F(1) has five subunits: alpha(3), beta(3), gamma(1), delta(1), epsilon(1). F(0) has three main subunits: a(1), b(2) and c(10-14). The alpha and beta chains form an alternating ring which encloses part of the gamma chain. F(1) is attached to F(0) by a central stalk formed by the gamma and epsilon chains, while a peripheral stalk is formed by the delta and b chains.

It is found in the cell inner membrane. Functionally, f(1)F(0) ATP synthase produces ATP from ADP in the presence of a proton or sodium gradient. F-type ATPases consist of two structural domains, F(1) containing the extramembraneous catalytic core and F(0) containing the membrane proton channel, linked together by a central stalk and a peripheral stalk. During catalysis, ATP synthesis in the catalytic domain of F(1) is coupled via a rotary mechanism of the central stalk subunits to proton translocation. Key component of the F(0) channel; it plays a direct role in translocation across the membrane. A homomeric c-ring of between 10-14 subunits forms the central stalk rotor element with the F(1) delta and epsilon subunits. This is ATP synthase subunit c from Serratia proteamaculans (strain 568).